Consider the following 287-residue polypeptide: 3-hydroxyanthranilate 3,4-dioxygenase (287 aa).

Residues 1–163 (MTNQSLHVNI…SKENETGKPD (163 aa)) are domain A (catalytic). Arginine 46 contacts O2. The Fe cation site is built by histidine 50, glutamate 56, and histidine 94. Glutamate 56 is a substrate binding site. 2 residues coordinate substrate: arginine 98 and glutamate 108. The interval 164 to 180 (PANPIKPAPYPLNTMNV) is linker. A domain B region spans residues 181–287 (MTPFSFREWV…AQDPDRKRPY (107 aa)).

Belongs to the 3-HAO family. Monomer. Fe(2+) is required as a cofactor.

Its subcellular location is the cytoplasm. The protein localises to the cytosol. It catalyses the reaction 3-hydroxyanthranilate + O2 = (2Z,4Z)-2-amino-3-carboxymuconate 6-semialdehyde. It participates in cofactor biosynthesis; NAD(+) biosynthesis; quinolinate from L-kynurenine: step 3/3. Functionally, catalyzes the oxidative ring opening of 3-hydroxyanthranilate to 2-amino-3-carboxymuconate semialdehyde, which spontaneously cyclizes to quinolinate. The polypeptide is 3-hydroxyanthranilate 3,4-dioxygenase (haao) (Danio rerio (Zebrafish)).